The following is a 301-amino-acid chain: Hydroxymycolate synthase MmaA4 (301 aa).

Residues 42–43 (YS), 81–83 (GCG), 103–108 (TLSKNQ), 132–133 (WE), and I145 contribute to the S-adenosyl-L-methionine site. Residue C278 is part of the active site.

The protein belongs to the CFA/CMAS family. In terms of assembly, monomer.

It participates in lipid metabolism; mycolic acid biosynthesis. Involved in the biosynthesis of hydroxymycolate, a common precursor of oxygenated mycolic acids (methoxymycolate and ketomycolate). Probably transfers a methyl group from the S-adenosylmethionine (SAM) cofactor and, subsequently or simultaneously, a water molecule onto the double bound of ethylene substrates, leading to the formation of the hydroxylated product at the distal position. This is Hydroxymycolate synthase MmaA4 (cmaA) from Mycobacterium bovis (strain ATCC BAA-935 / AF2122/97).